Reading from the N-terminus, the 223-residue chain is Sigma non-opioid intracellular receptor 1 (223 aa).

Over 1-9 (MQWAVGRRW) the chain is Lumenal. Residues 2 to 8 (QWAVGRR) form a targeting to endoplasmic reticulum-associated lipid droplets region. Residues 10 to 30 (AWAALLLAVAAVLTQVVWLWL) form a helical membrane-spanning segment. Residues 31–223 (GTQSFVFQRE…LTTYLFGQDP (193 aa)) are Cytoplasmic-facing. An important for ligand-binding region spans residues 99-106 (SLSEYVLL). The C-terminal hydrophobic region stretch occupies residues 177–223 (VIPSTLAFALADTVFSTQDFLTLFYTLRSYARGLRLELTTYLFGQDP).

The protein belongs to the ERG2 family. In terms of assembly, homotrimer. Forms a ternary complex with ANK2 and ITPR3. The complex is disrupted by agonists. Interacts with KCNA4. Interacts with KCNA2; cocaine consumption leads to increased interaction. Interacts with RNF112 in an oxidative stress-regulated manner. In terms of tissue distribution, widely expressed with higher expression in liver, colon, prostate, placenta, small intestine, heart and pancreas. Expressed in the retina by retinal pigment epithelial cells. Expressed in alpha-motor neurons.

The protein resides in the nucleus inner membrane. Its subcellular location is the nucleus outer membrane. It localises to the nucleus envelope. The protein localises to the cytoplasmic vesicle. It is found in the endoplasmic reticulum membrane. The protein resides in the membrane. Its subcellular location is the lipid droplet. It localises to the cell junction. The protein localises to the cell membrane. It is found in the cell projection. The protein resides in the growth cone. Its subcellular location is the postsynaptic density membrane. Functions in lipid transport from the endoplasmic reticulum and is involved in a wide array of cellular functions probably through regulation of the biogenesis of lipid microdomains at the plasma membrane. Involved in the regulation of different receptors it plays a role in BDNF signaling and EGF signaling. Also regulates ion channels like the potassium channel and could modulate neurotransmitter release. Plays a role in calcium signaling through modulation together with ANK2 of the ITP3R-dependent calcium efflux at the endoplasmic reticulum. Plays a role in several other cell functions including proliferation, survival and death. Originally identified for its ability to bind various psychoactive drugs it is involved in learning processes, memory and mood alteration. Necessary for proper mitochondrial axonal transport in motor neurons, in particular the retrograde movement of mitochondria. Plays a role in protecting cells against oxidative stress-induced cell death via its interaction with RNF112. The protein is Sigma non-opioid intracellular receptor 1 (SIGMAR1) of Homo sapiens (Human).